The following is a 143-amino-acid chain: Antiholin-like protein LrgA (143 aa).

The next 4 membrane-spanning stretches (helical) occupy residues Val6 to Ile26, Leu30 to Leu50, Leu61 to Ile81, and Val97 to Leu117.

The protein belongs to the CidA/LrgA family. LrgA subfamily.

The protein localises to the cell membrane. In terms of biological role, inhibits the expression or activity of extracellular murein hydrolases by interacting, possibly with LrgB, with the holin-like protein CidA. The LrgAB and CidA proteins may affect the proton motive force of the membrane. May be involved in programmed cell death (PCD), possibly triggering PCD in response to antibiotics and environmental stresses. The chain is Antiholin-like protein LrgA from Bacillus cereus (strain AH187).